The chain runs to 160 residues: Cytochrome b6-f complex subunit 4 (160 aa).

The next 3 helical transmembrane spans lie at 36-56, 95-115, and 131-151; these read LLYI…GLAV, LLGV…PFLE, and TVFL…TLPI.

This sequence belongs to the cytochrome b family. PetD subfamily. As to quaternary structure, the 4 large subunits of the cytochrome b6-f complex are cytochrome b6, subunit IV (17 kDa polypeptide, petD), cytochrome f and the Rieske protein, while the 4 small subunits are petG, petL, petM and petN. The complex functions as a dimer.

It is found in the plastid. It localises to the chloroplast thylakoid membrane. Its function is as follows. Component of the cytochrome b6-f complex, which mediates electron transfer between photosystem II (PSII) and photosystem I (PSI), cyclic electron flow around PSI, and state transitions. This chain is Cytochrome b6-f complex subunit 4, found in Spinacia oleracea (Spinach).